A 312-amino-acid chain; its full sequence is MSFHQQFFTLNNGNKIPAIAIIGTGTRWYKNEETDATFSNSLVEQIVYALKLPGIIHIDAAEIYRTYPEVGKALSLTEKPRNAIFLTDKYSPQIKMSDSPADGLDLALKKMGTDYVDLYLLHSPFVSKEVNGLSLEEAWKDMEQLYKSGKAKNIGVSNFAVEDLQRILKVAEVKPQVNQIEFSPFLQNQTPGIYKFCQEHDILVEAYSPLGPLQKKTAQDDSQPFFEYVKELSEKYIKSEAQIILRWVTKRGVLPVTTSSKPQRISDAQNLFSFDLTAEEVDKITELGLEHEPLRLYWNKLYGKYNYAAQKV.

The NADPH site is built by G25, T26, R27, and D59. Residues Y64 and H122 each act as proton donor in the active site. S123 is modified (phosphoserine). NADPH-binding residues include S157, Q179, S208, L210, T257, T258, S259, S260, K261, and R264.

Belongs to the aldo/keto reductase family. As to quaternary structure, monomer. The N-terminus is blocked.

It is found in the cytoplasm. The protein localises to the nucleus. Its function is as follows. Reduces aromatic alpha-keto amides, aliphatic and aromatic alpha-keto esters, but not beta-keto esters. In Saccharomyces cerevisiae (strain ATCC 204508 / S288c) (Baker's yeast), this protein is NADPH-dependent alpha-keto amide reductase.